Consider the following 295-residue polypeptide: Peptide transport system permease protein SapC (295 aa).

The next 6 membrane-spanning stretches (helical) occupy residues 27-47, 102-122, 129-149, 157-177, 219-239, and 262-282; these read IALF…FASY, LLVV…AGLL, FVGH…AVVI, LWNA…HTIY, VARA…ISLG, and PWTV…SIIF. One can recognise an ABC transmembrane type-1 domain in the interval 98-278; that stretch reads LGSALLVVFS…GFAIIFTILL (181 aa).

It belongs to the binding-protein-dependent transport system permease family. OppBC subfamily.

It is found in the cell inner membrane. Its function is as follows. Involved in a peptide intake transport system that plays a role in the resistance to antimicrobial peptides. This is Peptide transport system permease protein SapC (sapC) from Haemophilus influenzae (strain ATCC 51907 / DSM 11121 / KW20 / Rd).